We begin with the raw amino-acid sequence, 83 residues long: uncharacterized protein (83 aa).

Residues 57-83 are disordered; that stretch reads ESVEEEEEFEDYDEFEEEEEYYYDDEY.

This is an uncharacterized protein from Archaeoglobus fulgidus (strain ATCC 49558 / DSM 4304 / JCM 9628 / NBRC 100126 / VC-16).